The sequence spans 233 residues: tRNA (guanine-N(7)-)-methyltransferase (233 aa).

Positions methionine 1–proline 22 are disordered. The S-adenosyl-L-methionine site is built by glutamate 64, glutamate 89, aspartate 116, and aspartate 138. Aspartate 138 is a catalytic residue. Substrate-binding positions include lysine 142, aspartate 174, and threonine 212–glutamate 215.

It belongs to the class I-like SAM-binding methyltransferase superfamily. TrmB family.

It catalyses the reaction guanosine(46) in tRNA + S-adenosyl-L-methionine = N(7)-methylguanosine(46) in tRNA + S-adenosyl-L-homocysteine. It functions in the pathway tRNA modification; N(7)-methylguanine-tRNA biosynthesis. Functionally, catalyzes the formation of N(7)-methylguanine at position 46 (m7G46) in tRNA. This is tRNA (guanine-N(7)-)-methyltransferase from Brucella melitensis biotype 1 (strain ATCC 23456 / CCUG 17765 / NCTC 10094 / 16M).